The following is a 305-amino-acid chain: Oligopeptide transport ATP-binding protein OppF (305 aa).

The 246-residue stretch at 6–251 (LEIKHLKQHF…PLHPYTKSLL (246 aa)) folds into the ABC transporter domain. 42–49 (GESGCGKS) contributes to the ATP binding site.

The protein belongs to the ABC transporter superfamily. As to quaternary structure, the complex is composed of two ATP-binding proteins (OppD and OppF), two transmembrane proteins (OppB and OppC) and a solute-binding protein (OppA).

The protein resides in the cell membrane. The enzyme catalyses a [peptide](out) + ATP + H2O = a [peptide](in) + ADP + phosphate + H(+). In terms of biological role, part of the ABC transporter complex OppABCDF involved in the uptake of oligopeptides. Probably responsible for energy coupling to the transport system. Required for genetic competence but not for peptide transport or for sporulation. This Bacillus subtilis (strain 168) protein is Oligopeptide transport ATP-binding protein OppF.